The chain runs to 156 residues: Arginine repressor (156 aa).

Belongs to the ArgR family.

The protein resides in the cytoplasm. The protein operates within amino-acid biosynthesis; L-arginine biosynthesis [regulation]. Regulates arginine biosynthesis genes. This is Arginine repressor from Shewanella oneidensis (strain ATCC 700550 / JCM 31522 / CIP 106686 / LMG 19005 / NCIMB 14063 / MR-1).